The sequence spans 215 residues: Probable phosphoglycerate mutase GpmB (215 aa).

Residues 8–15 (RHGETQWN), 21–22 (QG), R58, R60, 82–85 (ELNM), 104–105 (RR), and 151–152 (GI) each bind substrate. H9 functions as the Tele-phosphohistidine intermediate in the catalytic mechanism. The active-site Proton donor/acceptor is the E82.

Belongs to the phosphoglycerate mutase family. GpmB subfamily.

It carries out the reaction (2R)-2-phosphoglycerate = (2R)-3-phosphoglycerate. Its pathway is carbohydrate degradation; glycolysis; pyruvate from D-glyceraldehyde 3-phosphate: step 3/5. The protein is Probable phosphoglycerate mutase GpmB of Shigella boydii serotype 18 (strain CDC 3083-94 / BS512).